The primary structure comprises 315 residues: Calumenin (315 aa).

The N-terminal stretch at Met-1–Ser-19 is a signal peptide. EF-hand domains follow at residues Glu-68–Lys-103, Tyr-104–Asp-139, Gln-151–Asp-186, Met-188–Asp-223, Trp-229–Asp-264, and His-265–Ser-300. Ca(2+) is bound by residues Asp-81, Asp-83, Asp-85, Tyr-87, Glu-92, Asp-117, Ser-119, Asp-121, and Glu-128. Asn-131 is a glycosylation site (N-linked (GlcNAc...) asparagine). Residues Asp-164, Asp-166, Asp-168, Glu-175, Asp-201, Asn-203, Asp-205, Glu-212, Asp-242, Asn-244, Asp-246, Lys-248, Glu-253, Asp-278, Asn-280, Asp-282, Lys-284, and Glu-289 each contribute to the Ca(2+) site. The Prevents secretion from ER signature appears at His-312–Phe-315.

It belongs to the CREC family. As to quaternary structure, interacts with ggcx.

Its subcellular location is the endoplasmic reticulum membrane. The protein resides in the golgi apparatus. It localises to the secreted. It is found in the melanosome. The protein localises to the sarcoplasmic reticulum lumen. Involved in regulation of vitamin K-dependent carboxylation of multiple N-terminal glutamate residues. Seems to inhibit gamma-carboxylase ggcx. Binds 7 calcium ions with a low affinity. The protein is Calumenin (calu) of Xenopus laevis (African clawed frog).